The primary structure comprises 163 residues: Cell division protein SepF (163 aa).

The tract at residues 25–53 is disordered; that stretch reads SVAPHSGEERESAFSRRSAERAERTERPT. Positions 30–51 are enriched in basic and acidic residues; it reads SGEERESAFSRRSAERAERTER.

It belongs to the SepF family. As to quaternary structure, homodimer. Interacts with FtsZ.

The protein resides in the cytoplasm. Functionally, cell division protein that is part of the divisome complex and is recruited early to the Z-ring. Probably stimulates Z-ring formation, perhaps through the cross-linking of FtsZ protofilaments. Its function overlaps with FtsA. The chain is Cell division protein SepF from Heliobacterium modesticaldum (strain ATCC 51547 / Ice1).